The chain runs to 204 residues: ATP synthase subunit b 2 (204 aa).

A helical transmembrane segment spans residues 50–70 (IFWLAVTFGLLLFLMSKVALP).

Belongs to the ATPase B chain family. F-type ATPases have 2 components, F(1) - the catalytic core - and F(0) - the membrane proton channel. F(1) has five subunits: alpha(3), beta(3), gamma(1), delta(1), epsilon(1). F(0) has three main subunits: a(1), b(2) and c(10-14). The alpha and beta chains form an alternating ring which encloses part of the gamma chain. F(1) is attached to F(0) by a central stalk formed by the gamma and epsilon chains, while a peripheral stalk is formed by the delta and b chains.

Its subcellular location is the cell inner membrane. Its function is as follows. F(1)F(0) ATP synthase produces ATP from ADP in the presence of a proton or sodium gradient. F-type ATPases consist of two structural domains, F(1) containing the extramembraneous catalytic core and F(0) containing the membrane proton channel, linked together by a central stalk and a peripheral stalk. During catalysis, ATP synthesis in the catalytic domain of F(1) is coupled via a rotary mechanism of the central stalk subunits to proton translocation. Component of the F(0) channel, it forms part of the peripheral stalk, linking F(1) to F(0). The b'-subunit is a diverged and duplicated form of b found in plants and photosynthetic bacteria. This Rhodospirillum centenum (strain ATCC 51521 / SW) protein is ATP synthase subunit b 2 (atpF2).